A 255-amino-acid polypeptide reads, in one-letter code: uncharacterized protein (255 aa).

The protein belongs to the methyltransferase superfamily.

This is an uncharacterized protein from Mycolicibacterium gilvum (strain PYR-GCK) (Mycobacterium gilvum (strain PYR-GCK)).